Reading from the N-terminus, the 309-residue chain is Uridylate-specific endoribonuclease C (309 aa).

The signal sequence occupies residues 1–22 (MASGYDFGWIPVLLSLFTLTDA). The EndoU domain maps to 27-303 (VNQELSNIFN…IGTAYPKLLS (277 aa)). Residues asparagine 53 and asparagine 121 are each glycosylated (N-linked (GlcNAc...) asparagine). Catalysis depends on residues histidine 181, histidine 197, and lysine 242.

Belongs to the ENDOU family. As to quaternary structure, monomer. Mn(2+) is required as a cofactor.

Its subcellular location is the secreted. It catalyses the reaction ribonucleotidyl-uridine-RNA = a 5'-end dephospho-uridine-RNA + a 3'-end 2',3'-cyclophospho-ribonucleotide-RNA. Its function is as follows. Endoribonuclease that cleaves single-stranded RNAs at 5' of uridylates and releases a product with a 2',3'-cyclic phosphate at the 3'-end. The UU and GU sites are more efficiently cleaved than CU and AU sites. The sequence is that of Uridylate-specific endoribonuclease C (endouc) from Danio rerio (Zebrafish).